Consider the following 644-residue polypeptide: Acetyl-coenzyme A synthetase (644 aa).

CoA is bound by residues 189 to 192 (RGGK) and T307. Residues 383–385 (GEP), 407–412 (DTWWQT), D496, and R511 each bind ATP. S519 is a CoA binding site. Position 522 (R522) interacts with ATP. Mg(2+) contacts are provided by V533, H535, and V538. R580 contributes to the CoA binding site. The residue at position 605 (K605) is an N6-acetyllysine.

It belongs to the ATP-dependent AMP-binding enzyme family. Mg(2+) serves as cofactor. In terms of processing, acetylated. Deacetylation by the SIR2-homolog deacetylase activates the enzyme.

It carries out the reaction acetate + ATP + CoA = acetyl-CoA + AMP + diphosphate. Functionally, catalyzes the conversion of acetate into acetyl-CoA (AcCoA), an essential intermediate at the junction of anabolic and catabolic pathways. AcsA undergoes a two-step reaction. In the first half reaction, AcsA combines acetate with ATP to form acetyl-adenylate (AcAMP) intermediate. In the second half reaction, it can then transfer the acetyl group from AcAMP to the sulfhydryl group of CoA, forming the product AcCoA. This Rubrobacter xylanophilus (strain DSM 9941 / JCM 11954 / NBRC 16129 / PRD-1) protein is Acetyl-coenzyme A synthetase.